The following is a 55-amino-acid chain: Large ribosomal subunit protein bL33 (55 aa).

It belongs to the bacterial ribosomal protein bL33 family.

This is Large ribosomal subunit protein bL33 from Paraburkholderia phytofirmans (strain DSM 17436 / LMG 22146 / PsJN) (Burkholderia phytofirmans).